Here is a 172-residue protein sequence, read N- to C-terminus: Protein-export protein SecB (172 aa).

This sequence belongs to the SecB family. In terms of assembly, homotetramer, a dimer of dimers. One homotetramer interacts with 1 SecA dimer.

It is found in the cytoplasm. Its function is as follows. One of the proteins required for the normal export of preproteins out of the cell cytoplasm. It is a molecular chaperone that binds to a subset of precursor proteins, maintaining them in a translocation-competent state. It also specifically binds to its receptor SecA. This is Protein-export protein SecB from Xylella fastidiosa (strain 9a5c).